A 287-amino-acid polypeptide reads, in one-letter code: MKRIFLLIATNMAILLVASIVMSILGVNTSTMGGLLVFAAIFGFGGAFISLAISKWMAKKTMGCEVITTPRDNTERWLVETVARQAEQAGIKMPEVAIYQSPELNAFATGPSKDNSLVAVSSGLLYGMNQDEIEAVLAHEVSHVANGDMVTLTLIQGVVNTFVIFAARVVAGIIDNFVSSNDEEGEGLGMFAYMAVVFVLDMLFGILASMIVAYFSRIREYRADEGAAKLAGKEKMIAALDRLRQGPETGAMPASMSALGINGKKSMAELMMSHPPLEKRIEALRAH.

The next 2 helical transmembrane spans lie at 4–24 (IFLLIATNMAILLVASIVMSI) and 33–53 (GGLLVFAAIFGFGGAFISLAI). H139 provides a ligand contact to Zn(2+). Residue E140 is part of the active site. Position 143 (H143) interacts with Zn(2+). A run of 2 helical transmembrane segments spans residues 154–174 (LIQGVVNTFVIFAARVVAGII) and 195–215 (AVVFVLDMLFGILASMIVAYF). E220 is a binding site for Zn(2+).

It belongs to the peptidase M48B family. Zn(2+) serves as cofactor.

Its subcellular location is the cell inner membrane. This chain is Protease HtpX, found in Shewanella pealeana (strain ATCC 700345 / ANG-SQ1).